The primary structure comprises 183 residues: Ribosome-recycling factor (183 aa).

This sequence belongs to the RRF family.

It is found in the cytoplasm. Its function is as follows. Responsible for the release of ribosomes from messenger RNA at the termination of protein biosynthesis. May increase the efficiency of translation by recycling ribosomes from one round of translation to another. The chain is Ribosome-recycling factor from Buchnera aphidicola subsp. Baizongia pistaciae (strain Bp).